We begin with the raw amino-acid sequence, 351 residues long: Pentatricopeptide repeat-containing protein At2g40240, mitochondrial (351 aa).

The N-terminal 27 residues, 1–27 (MSLLRRRFVKQSVNCITFLQILAERSF), are a transit peptide targeting the mitochondrion. PPR repeat units lie at residues 106 to 140 (RKNAYDILISRLCKLGRIDDALIVIGDMSNGRLGL), 141 to 175 (TPSTYHPILCSLTRKYKIEEAWRVVESMRSKSVSM), 176 to 210 (DVTAYNYFLTSHCYDGELESASEVMRKIEEDGNSP), 211 to 245 (DSRSYDALVLGACRAGKVEAAMAILRRMEEDGVTV), 246 to 280 (LYSTHAHVITGLVEGGYYALGLEFVMAYAGKDLRL), and 281 to 315 (DSESFGFLAGKLVKRKRYEEAMIVVKEMVMRGLRM).

Belongs to the PPR family. P subfamily.

The protein resides in the mitochondrion. The sequence is that of Pentatricopeptide repeat-containing protein At2g40240, mitochondrial from Arabidopsis thaliana (Mouse-ear cress).